The primary structure comprises 196 residues: Ribosomal RNA large subunit methyltransferase E (196 aa).

The S-adenosyl-L-methionine site is built by G50, W52, D70, D87, and D112. The active-site Proton acceptor is K152.

The protein belongs to the class I-like SAM-binding methyltransferase superfamily. RNA methyltransferase RlmE family.

It localises to the cytoplasm. The enzyme catalyses uridine(2552) in 23S rRNA + S-adenosyl-L-methionine = 2'-O-methyluridine(2552) in 23S rRNA + S-adenosyl-L-homocysteine + H(+). In terms of biological role, specifically methylates the uridine in position 2552 of 23S rRNA at the 2'-O position of the ribose in the fully assembled 50S ribosomal subunit. This chain is Ribosomal RNA large subunit methyltransferase E, found in Bdellovibrio bacteriovorus (strain ATCC 15356 / DSM 50701 / NCIMB 9529 / HD100).